We begin with the raw amino-acid sequence, 213 residues long: Glutathione S-transferase DHAR2 (213 aa).

C6 carries the post-translational modification S-glutathionyl cysteine. K8 and D19 together coordinate glutathione. Residues K8 and D19 each contribute to the L-ascorbate site. Positions 10 to 83 constitute a GST N-terminal domain; the sequence is AVGAPDVLGD…DVIVGLLEEK (74 aa). At C20 the chain carries S-glutathionyl cysteine. Residue C20 is the Nucleophile of the active site. Positions 20-25 match the Glutathione-binding motif; it reads CPFSQR. The glutathione site is built by K47, V60, S73, H160, and W207. In terms of domain architecture, GST C-terminal spans 84–213; that stretch reads YPEPSLKTPP…VAGWESKVNA (130 aa). K210 contributes to the L-ascorbate binding site.

The protein belongs to the GST superfamily. DHAR family. In terms of assembly, monomer. Post-translationally, spontaneous S-glutathionylation in the presence of oxidized glutathione (GSSG).

It localises to the cytoplasm. Its subcellular location is the cytosol. It carries out the reaction RX + glutathione = an S-substituted glutathione + a halide anion + H(+). The catalysed reaction is L-dehydroascorbate + 2 glutathione = glutathione disulfide + L-ascorbate. Its function is as follows. Displays a dual function. As a soluble protein, exhibits glutathione-dependent thiol transferase and dehydroascorbate (DHA) reductase activities. Exhibits glutathione-dependent thiol transferase and dehydroascorbate (DHA) reductase activities. Key component of the ascorbate recycling system. Involved in the redox homeostasis, especially in scavenging of ROS under oxidative stresses. Plays a role in ozone tolerance. The sequence is that of Glutathione S-transferase DHAR2 (DHAR2) from Arabidopsis thaliana (Mouse-ear cress).